The sequence spans 161 residues: Nucleotide-binding protein XAC3671 (161 aa).

The protein belongs to the YajQ family.

In terms of biological role, nucleotide-binding protein. The sequence is that of Nucleotide-binding protein XAC3671 from Xanthomonas axonopodis pv. citri (strain 306).